We begin with the raw amino-acid sequence, 56 residues long: MAVQKSKKSRSMRGMRRSHDALTTMALSVDPTSGETHLRHNVTADGFYRGRKVINK.

Positions 1–16 are enriched in basic residues; that stretch reads MAVQKSKKSRSMRGMR. The interval 1-22 is disordered; the sequence is MAVQKSKKSRSMRGMRRSHDAL.

This sequence belongs to the bacterial ribosomal protein bL32 family.

The polypeptide is Large ribosomal subunit protein bL32 (Aliivibrio salmonicida (strain LFI1238) (Vibrio salmonicida (strain LFI1238))).